The chain runs to 442 residues: Histidinol dehydrogenase (442 aa).

NAD(+) is bound by residues Tyr-138, Gln-199, and Asn-222. Substrate contacts are provided by Ser-245, Gln-267, and His-270. The Zn(2+) site is built by Gln-267 and His-270. Residues Glu-335 and His-336 each act as proton acceptor in the active site. Substrate contacts are provided by His-336, Asp-369, Glu-423, and His-428. A Zn(2+)-binding site is contributed by Asp-369. His-428 lines the Zn(2+) pocket.

The protein belongs to the histidinol dehydrogenase family. Requires Zn(2+) as cofactor.

It catalyses the reaction L-histidinol + 2 NAD(+) + H2O = L-histidine + 2 NADH + 3 H(+). The protein operates within amino-acid biosynthesis; L-histidine biosynthesis; L-histidine from 5-phospho-alpha-D-ribose 1-diphosphate: step 9/9. Catalyzes the sequential NAD-dependent oxidations of L-histidinol to L-histidinaldehyde and then to L-histidine. This chain is Histidinol dehydrogenase, found in Ralstonia nicotianae (strain ATCC BAA-1114 / GMI1000) (Ralstonia solanacearum).